The primary structure comprises 285 residues: MKLCGFDVGLDRPFFLIAGPCVIESEQLQMDVAGRLKETTAALGIPFIFKSSFDKANRSSGTSFRGPGREKGLEILAKIRRELNVPVLTDVHTEDDITEAAKVVDVLQTPAFLCRQTDFIRAVAQSGKPVNIKKGQFLAPHDMKNVIDKARAAAREKGLPEDSFMACERGASFGYNNLVSDMRGLAIMRETGAPVVFDATHSVQLPGGQGTSSGGQREMVPVLARAAVAVGVAGLFMETHPDPCNALSDGPNAVPLKHMKALLETLVALDSVTKRNGFLENDFGA.

Belongs to the KdsA family.

The protein localises to the cytoplasm. The catalysed reaction is D-arabinose 5-phosphate + phosphoenolpyruvate + H2O = 3-deoxy-alpha-D-manno-2-octulosonate-8-phosphate + phosphate. It participates in carbohydrate biosynthesis; 3-deoxy-D-manno-octulosonate biosynthesis; 3-deoxy-D-manno-octulosonate from D-ribulose 5-phosphate: step 2/3. It functions in the pathway bacterial outer membrane biogenesis; lipopolysaccharide biosynthesis. This Paracidovorax citrulli (strain AAC00-1) (Acidovorax citrulli) protein is 2-dehydro-3-deoxyphosphooctonate aldolase.